Reading from the N-terminus, the 395-residue chain is Imidazolonepropionase (395 aa).

His72 and His74 together coordinate Fe(3+). The Zn(2+) site is built by His72 and His74. Residues Arg81, Tyr144, and His174 each contribute to the 4-imidazolone-5-propanoate site. N-formimidoyl-L-glutamate is bound at residue Tyr144. A Fe(3+)-binding site is contributed by His231. His231 contacts Zn(2+). Glu234 serves as a coordination point for 4-imidazolone-5-propanoate. Asp306 is a Fe(3+) binding site. Zn(2+) is bound at residue Asp306.

It belongs to the metallo-dependent hydrolases superfamily. HutI family. Zn(2+) serves as cofactor. The cofactor is Fe(3+).

The protein resides in the cytoplasm. The catalysed reaction is 4-imidazolone-5-propanoate + H2O = N-formimidoyl-L-glutamate. Its pathway is amino-acid degradation; L-histidine degradation into L-glutamate; N-formimidoyl-L-glutamate from L-histidine: step 3/3. In terms of biological role, catalyzes the hydrolytic cleavage of the carbon-nitrogen bond in imidazolone-5-propanoate to yield N-formimidoyl-L-glutamate. It is the third step in the universal histidine degradation pathway. This is Imidazolonepropionase from Pyrobaculum arsenaticum (strain DSM 13514 / JCM 11321 / PZ6).